The primary structure comprises 149 residues: uncharacterized protein (149 aa).

The N-acetyltransferase domain maps to 2–146 (LEVKTISVED…NHIVMYKTLR (145 aa)).

This sequence belongs to the acetyltransferase family.

This is an uncharacterized protein from Bacillus subtilis (strain 168).